The sequence spans 45 residues: Large ribosomal subunit protein bL34 (45 aa).

Composition is skewed to basic residues over residues 1-15 (MKAKSHLSNKKRKRA) and 22-45 (MKTKAGRKILARRRAKGRKRIAIK). Residues 1-45 (MKAKSHLSNKKRKRASGFLARMKTKAGRKILARRRAKGRKRIAIK) are disordered.

The protein belongs to the bacterial ribosomal protein bL34 family.

This Sulfurihydrogenibium sp. (strain YO3AOP1) protein is Large ribosomal subunit protein bL34.